The primary structure comprises 119 residues: Large ribosomal subunit protein bL20 (119 aa).

The protein belongs to the bacterial ribosomal protein bL20 family.

Functionally, binds directly to 23S ribosomal RNA and is necessary for the in vitro assembly process of the 50S ribosomal subunit. It is not involved in the protein synthesizing functions of that subunit. In Alkalilimnicola ehrlichii (strain ATCC BAA-1101 / DSM 17681 / MLHE-1), this protein is Large ribosomal subunit protein bL20.